A 302-amino-acid polypeptide reads, in one-letter code: ATP synthase gamma chain (302 aa).

The protein belongs to the ATPase gamma chain family. As to quaternary structure, F-type ATPases have 2 components, CF(1) - the catalytic core - and CF(0) - the membrane proton channel. CF(1) has five subunits: alpha(3), beta(3), gamma(1), delta(1), epsilon(1). CF(0) has three main subunits: a, b and c.

It localises to the cell membrane. Produces ATP from ADP in the presence of a proton gradient across the membrane. The gamma chain is believed to be important in regulating ATPase activity and the flow of protons through the CF(0) complex. This Enterococcus faecalis (strain ATCC 700802 / V583) protein is ATP synthase gamma chain.